A 473-amino-acid polypeptide reads, in one-letter code: Trigger factor (473 aa).

The 88-residue stretch at 174-261 folds into the PPIase FKBP-type domain; it reads GDIAVVSFKG…LKDLKEKELP (88 aa). The disordered stretch occupies residues 437 to 473; it reads EISEKVTKSTTKSKTKSKTKKESQAKSEPNKKKKEKK. Residues 456–466 are compositionally biased toward basic and acidic residues; the sequence is KKESQAKSEPN.

The protein belongs to the FKBP-type PPIase family. Tig subfamily.

It is found in the cytoplasm. It catalyses the reaction [protein]-peptidylproline (omega=180) = [protein]-peptidylproline (omega=0). Functionally, involved in protein export. Acts as a chaperone by maintaining the newly synthesized protein in an open conformation. Functions as a peptidyl-prolyl cis-trans isomerase. The chain is Trigger factor from Prochlorococcus marinus (strain MIT 9515).